Reading from the N-terminus, the 360-residue chain is Dual-specificity RNA methyltransferase RlmN (360 aa).

Residue Glu-93 is the Proton acceptor of the active site. In terms of domain architecture, Radical SAM core spans 99-326; the sequence is EEDRNTLCIS…VITRSSRGAD (228 aa). Cys-106 and Cys-331 are oxidised to a cystine. Residues Cys-113, Cys-117, and Cys-120 each contribute to the [4Fe-4S] cluster site. Residues 158-159, Ser-190, 212-214, and Asn-288 contribute to the S-adenosyl-L-methionine site; these read GE and SLN. Cys-331 acts as the S-methylcysteine intermediate in catalysis.

This sequence belongs to the radical SAM superfamily. RlmN family. It depends on [4Fe-4S] cluster as a cofactor.

It is found in the cytoplasm. It catalyses the reaction adenosine(2503) in 23S rRNA + 2 reduced [2Fe-2S]-[ferredoxin] + 2 S-adenosyl-L-methionine = 2-methyladenosine(2503) in 23S rRNA + 5'-deoxyadenosine + L-methionine + 2 oxidized [2Fe-2S]-[ferredoxin] + S-adenosyl-L-homocysteine. The enzyme catalyses adenosine(37) in tRNA + 2 reduced [2Fe-2S]-[ferredoxin] + 2 S-adenosyl-L-methionine = 2-methyladenosine(37) in tRNA + 5'-deoxyadenosine + L-methionine + 2 oxidized [2Fe-2S]-[ferredoxin] + S-adenosyl-L-homocysteine. In terms of biological role, specifically methylates position 2 of adenine 2503 in 23S rRNA and position 2 of adenine 37 in tRNAs. m2A2503 modification seems to play a crucial role in the proofreading step occurring at the peptidyl transferase center and thus would serve to optimize ribosomal fidelity. This is Dual-specificity RNA methyltransferase RlmN from Geobacter sulfurreducens (strain ATCC 51573 / DSM 12127 / PCA).